Reading from the N-terminus, the 311-residue chain is tRNA dimethylallyltransferase (311 aa).

14 to 21 (GPTAVGKT) serves as a coordination point for ATP. Residue 16 to 21 (TAVGKT) coordinates substrate. Positions 39–42 (DSMQ) are interaction with substrate tRNA.

It belongs to the IPP transferase family. As to quaternary structure, monomer. Mg(2+) is required as a cofactor.

The catalysed reaction is adenosine(37) in tRNA + dimethylallyl diphosphate = N(6)-dimethylallyladenosine(37) in tRNA + diphosphate. Catalyzes the transfer of a dimethylallyl group onto the adenine at position 37 in tRNAs that read codons beginning with uridine, leading to the formation of N6-(dimethylallyl)adenosine (i(6)A). This Lactiplantibacillus plantarum (strain ATCC BAA-793 / NCIMB 8826 / WCFS1) (Lactobacillus plantarum) protein is tRNA dimethylallyltransferase.